A 248-amino-acid polypeptide reads, in one-letter code: MSGGGVIRGPAGNNDCRIYVGNLPPDIRTKDIEDVFYKYGAIRDIDLKNRRGGPPFAFVEFEDPRDAEDAVYGRDGYDYDGYRLRVEFPRSGRGTGRGGGGGGGGGAPRGRYGPPSRRSENRVVVSGLPPSGSWQDLKDHMREAGDVCYADVYRDGTGVVEFVRKEDMTYAVRKLDNTKFRSHEGETAYIRVKVDGPRSPSYGRSRSRSRSRSRSRSRSNSRSRSYSPRRSRGSPRYSPRHSRSRSRT.

N-acetylserine is present on Ser2. Ser2 is modified (phosphoserine). One can recognise an RRM 1 domain in the interval 16-91 (CRIYVGNLPP…YRLRVEFPRS (76 aa)). Lys30 is covalently cross-linked (Glycyl lysine isopeptide (Lys-Gly) (interchain with G-Cter in SUMO2)). Lys38 is modified (N6-acetyllysine; alternate). A Glycyl lysine isopeptide (Lys-Gly) (interchain with G-Cter in SUMO2); alternate cross-link involves residue Lys38. A disordered region spans residues 88–134 (FPRSGRGTGRGGGGGGGGGAPRGRYGPPSRRSENRVVVSGLPPSGSW). Arg93, Arg97, and Arg109 each carry asymmetric dimethylarginine; alternate. Residues Arg93, Arg97, and Arg109 each carry the omega-N-methylarginine; alternate modification. Residues 93–108 (RGTGRGGGGGGGGGAP) are compositionally biased toward gly residues. Position 111 is an omega-N-methylarginine (Arg111). The RRM 2 domain occupies 121–195 (NRVVVSGLPP…ETAYIRVKVD (75 aa)). Position 133 is a phosphoserine (Ser133). The residue at position 179 (Lys179) is an N6-acetyllysine. The segment at 191–248 (RVKVDGPRSPSYGRSRSRSRSRSRSRSRSNSRSRSYSPRRSRGSPRYSPRHSRSRSRT) is disordered. Positions 198–247 (RSPSYGRSRSRSRSRSRSRSRSNSRSRSYSPRRSRGSPRYSPRHSRSRSR) are interaction with SAFB1. Phosphoserine is present on residues Ser199 and Ser201. Phosphotyrosine is present on Tyr202. Residues Ser205, Ser207, Ser209, Ser231, Ser234, and Ser238 each carry the phosphoserine modification. Positions 205-248 (SRSRSRSRSRSRSRSNSRSRSYSPRRSRGSPRYSPRHSRSRSRT) are enriched in basic residues.

The protein belongs to the splicing factor SR family. Consists of two polypeptides of p32 and p33. Identified in the spliceosome C complex. Component of a ribonucleoprotein complex containing mRNAs and RNA-binding proteins including DDX5, HNRNPH2 and SRSF1 as well as splicing regulator ARVCF. In vitro, self-associates and binds SRSF2, SNRNP70 and U2AF1 but not U2AF2. Binds SREK1/SFRS12. Interacts with SAFB/SAFB1. Interacts with PSIP1/LEDGF. Interacts with RSRC1 (via Arg/Ser-rich domain). Interacts with ZRSR2/U2AF1-RS2. Interacts with CCDC55 (via C-terminus). Interacts with SRPK1 and a sliding docking interaction is essential for its sequential and processive phosphorylation by SRPK1. Interacts with NXF1. Interacts with CCNL1, CCNL2 and CDK11B. Interacts with RRP1B. Interacts (when phosphorylated in its RS domain) with TNPO3; promoting nuclear import. Interacts with ILDR1 (via C-terminus) and ILDR2. Post-translationally, phosphorylated by CLK1, CLK2, CLK3 and CLK4. Phosphorylated by SRPK1 at multiple serines in its RS domain via a directional (C-terminal to N-terminal) and a dual-track mechanism incorporating both processive phosphorylation (in which the kinase stays attached to the substrate after each round of phosphorylation) and distributive phosphorylation steps (in which the kinase and substrate dissociate after each phosphorylation event). The RS domain of SRSF1 binds to a docking groove in the large lobe of the kinase domain of SRPK1 and this induces certain structural changes in SRPK1 and/or RRM 2 domain of SRSF1, allowing RRM 2 to bind the kinase and initiate phosphorylation. The cycles continue for several phosphorylation steps in a processive manner (steps 1-8) until the last few phosphorylation steps (approximately steps 9-12). During that time, a mechanical stress induces the unfolding of the beta-4 motif in RRM 2, which then docks at the docking groove of SRPK1. This also signals RRM 2 to begin to dissociate, which facilitates SRSF1 dissociation after phosphorylation is completed. In terms of processing, asymmetrically dimethylated at arginines, probably by PRMT1, methylation promotes localization to nuclear speckles.

The protein resides in the cytoplasm. It is found in the nucleus speckle. Its function is as follows. Plays a role in preventing exon skipping, ensuring the accuracy of splicing and regulating alternative splicing. Interacts with other spliceosomal components, via the RS domains, to form a bridge between the 5'- and 3'-splice site binding components, U1 snRNP and U2AF. Can stimulate binding of U1 snRNP to a 5'-splice site-containing pre-mRNA. Binds to purine-rich RNA sequences, either the octamer, 5'-RGAAGAAC-3' (r=A or G) or the decamers, AGGACAGAGC/AGGACGAAGC. Binds preferentially to the 5'-CGAGGCG-3' motif in vitro. Three copies of the octamer constitute a powerful splicing enhancer in vitro, the ASF/SF2 splicing enhancer (ASE) which can specifically activate ASE-dependent splicing. May function as export adapter involved in mRNA nuclear export through the TAP/NXF1 pathway. The polypeptide is Serine/arginine-rich splicing factor 1 (SRSF1) (Bos taurus (Bovine)).